An 88-amino-acid chain; its full sequence is UPF0250 protein Shew_2940 (88 aa).

Belongs to the UPF0250 family.

The sequence is that of UPF0250 protein Shew_2940 from Shewanella loihica (strain ATCC BAA-1088 / PV-4).